Consider the following 650-residue polypeptide: Transcription factor LHW (650 aa).

2 disordered regions span residues 381–417 (LTKVSNSSVTTPSHSSPQGSQLFEKKHGQPLGPSSVY) and 431–470 (LKREGSPRMVNKNETAKPANNRKRLKPGENPRPRPKDRQM). Residues 384–397 (VSNSSVTTPSHSSP) show a composition bias toward low complexity. The short motif at 451 to 458 (NRKRLKPG) is the Nuclear localization signal element. The 50-residue stretch at 455 to 504 (LKPGENPRPRPKDRQMIQDRVKELREIIPNGAKCSIDALLERTIKHMLFL) folds into the bHLH domain. A compositionally biased stretch (basic and acidic residues) spans 456–470 (KPGENPRPRPKDRQM).

Belongs to the bHLH protein family. LHW subfamily. Homodimer. Can also interact with bHLH proteins. Expressed in both root and shoot meristems. Present in root tips.

It localises to the nucleus. In terms of biological role, transcription activator that regulates root development; promotes the production of stele cells in roots. Coordinately controls the number of all vascular cell types by regulating the size of the pool of cells from which they arise. The chain is Transcription factor LHW (LHW) from Arabidopsis thaliana (Mouse-ear cress).